The chain runs to 325 residues: Intelectin-2 (325 aa).

An N-terminal signal peptide occupies residues 1–26; it reads MLSMLRTMTRLCFLLFFSVATSGCSA. The 224-residue stretch at 44-267 folds into the Fibrinogen C-terminal domain; it reads FSFSSLPRSC…AANALCAGIK (224 aa). A disulfide bond links Cys53 and Cys82. His98, Glu99, Asp101, Gly104, Gly109, Asp110, and Asp145 together coordinate Ca(2+). Cystine bridges form between Cys106–Cys292, Cys211–Cys271, and Cys263–Cys277. Ca(2+) is bound by residues Asn272, Glu274, and Asp294. 274–275 lines the a carbohydrate pocket; it reads EH.

As to expression, expressed only in the small intestine.

It localises to the secreted. May play a role in the defense system against pathogens. This chain is Intelectin-2 (ITLN2), found in Homo sapiens (Human).